A 297-amino-acid chain; its full sequence is Homoserine kinase (297 aa).

Residue 82–92 (PLTRGLGSSAS) coordinates ATP.

This sequence belongs to the GHMP kinase family. Homoserine kinase subfamily.

Its subcellular location is the cytoplasm. It carries out the reaction L-homoserine + ATP = O-phospho-L-homoserine + ADP + H(+). The protein operates within amino-acid biosynthesis; L-threonine biosynthesis; L-threonine from L-aspartate: step 4/5. Its function is as follows. Catalyzes the ATP-dependent phosphorylation of L-homoserine to L-homoserine phosphate. The protein is Homoserine kinase of Bacillus cereus (strain B4264).